We begin with the raw amino-acid sequence, 137 residues long: Putative pre-16S rRNA nuclease (137 aa).

This sequence belongs to the YqgF nuclease family.

The protein resides in the cytoplasm. Its function is as follows. Could be a nuclease involved in processing of the 5'-end of pre-16S rRNA. The protein is Putative pre-16S rRNA nuclease of Bacillus cereus (strain AH187).